The chain runs to 156 residues: Endogenous retrovirus group K member 104 Pro protein (156 aa).

The region spanning 21 to 96 (FEGLVDTEAD…IPLNLWGQDL (76 aa)) is the Peptidase A2 domain. D26 is an active-site residue. Positions 111 to 156 (YSPTSQKIMTKMGYIPGKGLGKNEDGIKVPVEAKINQKREGIGYPF) constitute a G-patch domain.

The protein belongs to the peptidase A2 family. HERV class-II K(HML-2) subfamily. As to quaternary structure, active as a homodimer. Post-translationally, autoproteolytically processed at the N-terminus. Expected C-terminal autoprocessing not detected. The sequence shown is that of the processed Pro protein.

The catalysed reaction is Processing at the authentic HIV-1 PR recognition site and release of the mature p17 matrix and the p24 capsid protein, as a result of the cleavage of the -SQNY-|-PIVQ- cleavage site.. In terms of biological role, retroviral proteases have roles in the processing of the primary translation products and the maturation of the viral particle. Endogenous Pro proteins may have kept, lost or modified their original function during evolution. This is Endogenous retrovirus group K member 104 Pro protein (HERV-K104) from Homo sapiens (Human).